We begin with the raw amino-acid sequence, 288 residues long: Probable HTH-type transcriptional regulator STM3175 (288 aa).

The 100-residue stretch at 14 to 113 folds into the HTH araC/xylS-type domain; that stretch reads RRVCDHIERH…GQSPRRFRQS (100 aa). DNA-binding regions (H-T-H motif) lie at residues 31–52 and 80–103; these read EALSRMAHSSPFHFHRQFTTWS and VIDIALDAGFQNPESFTRAFKTAF. The interval 111–288 is putative effector binding domain; binds the peptide antibiotic albicidin; sequence RQSPDWLAWH…LLTDIYLPLR (178 aa).

In terms of assembly, homodimer.

Probable transcription factor. The polypeptide is Probable HTH-type transcriptional regulator STM3175 (Salmonella typhimurium (strain LT2 / SGSC1412 / ATCC 700720)).